We begin with the raw amino-acid sequence, 123 residues long: Nitrogen regulatory protein GlnK2 (123 aa).

ATP-binding positions include 38-40 and S49; that span reads SLT. An ADP-binding site is contributed by S49. Y62 carries the O-UMP-tyrosine modification. Residues V75, 98–101, and R114 contribute to the ATP site; that span reads GDGK. 98–101 is a binding site for ADP; sequence GDGK. 98 to 101 contributes to the AMP binding site; sequence GDGK.

Belongs to the P(II) protein family. As to quaternary structure, homotrimer. Interacts with the glutamine synthetase 3 (GS3) in the presence of 2-oxoglutarate. Interacts in vitro with Amt1 after ammonium shock. May also interact with Amt2. Uridylylated on Tyr-62.

Its subcellular location is the cytoplasm. With respect to regulation, binds the effectors ADP and ATP. Also binds AMP with high affinity, raising the possibility that AMP could be an important PII effector, at least in archaea. The change in the ATP/AMP ratio may be more relevant for describing the energy status in the cells than the ATP/ADP ratio alone. In terms of biological role, involved in the regulation of nitrogen metabolism. Regulates the activity of its targets by protein-protein interaction in response to the nitrogen status of the cell. Increases the activity of the glutamine synthetase 3 in the presence of 2-oxoglutarate. May regulate the activity of the ammonia channel Amt2 via direct interaction. This Haloferax mediterranei (strain ATCC 33500 / DSM 1411 / JCM 8866 / NBRC 14739 / NCIMB 2177 / R-4) (Halobacterium mediterranei) protein is Nitrogen regulatory protein GlnK2.